A 347-amino-acid chain; its full sequence is Probable cytosolic iron-sulfur protein assembly protein 1 (347 aa).

WD repeat units follow at residues 11–48 (LHNE…DGLV), 62–101 (SHKK…GDAD), 122–161 (GHEN…EEYE), 168–207 (EHSQ…WEAA), 212–255 (GHEG…SIEE), 266–304 (VHGK…VWEV), and 311–347 (SHSI…WAYN).

The protein belongs to the WD repeat CIA1 family. In terms of assembly, interacts with NAR1.

The protein resides in the cytoplasm. Its subcellular location is the nucleus. Essential component of the cytosolic iron-sulfur (Fe/S) protein assembly machinery. Required for the maturation of extramitochondrial Fe/S proteins. This chain is Probable cytosolic iron-sulfur protein assembly protein 1, found in Vanderwaltozyma polyspora (strain ATCC 22028 / DSM 70294 / BCRC 21397 / CBS 2163 / NBRC 10782 / NRRL Y-8283 / UCD 57-17) (Kluyveromyces polysporus).